A 273-amino-acid polypeptide reads, in one-letter code: Putative phosphoenolpyruvate synthase regulatory protein (273 aa).

153–160 is an ADP binding site; sequence GVSRSGKT.

It belongs to the pyruvate, phosphate/water dikinase regulatory protein family. PSRP subfamily.

It catalyses the reaction [pyruvate, water dikinase] + ADP = [pyruvate, water dikinase]-phosphate + AMP + H(+). It carries out the reaction [pyruvate, water dikinase]-phosphate + phosphate + H(+) = [pyruvate, water dikinase] + diphosphate. Its function is as follows. Bifunctional serine/threonine kinase and phosphorylase involved in the regulation of the phosphoenolpyruvate synthase (PEPS) by catalyzing its phosphorylation/dephosphorylation. The polypeptide is Putative phosphoenolpyruvate synthase regulatory protein (Variovorax paradoxus (strain S110)).